The primary structure comprises 344 residues: Autophagy-related protein 14 (344 aa).

The interval 3–18 (CPICHHRAHVVYCAHC) is cysteine repeats. The stretch at 25–156 (LLLKLKLDLI…VSKICESARD (132 aa)) forms a coiled coil.

It belongs to the ATG14 family. Component of the autophagy-specific VPS34 PI3-kinase complex I composed of VPS15, VPS30, VPS34, ATG14 and ATG38. Interacts directly with ATG38.

It localises to the preautophagosomal structure membrane. The protein resides in the vacuole membrane. Required for cytoplasm to vacuole transport (Cvt) and autophagy as a part of the autophagy-specific VPS34 PI3-kinase complex I. This complex is essential to recruit the ATG8-phosphatidylinositol conjugate and the ATG12-ATG5 conjugate to the pre-autophagosomal structure. ATG14 mediates the specific binding of the VPS34 PI3-kinase complex I to the preautophagosomal structure (PAS). The protein is Autophagy-related protein 14 (ATG14) of Saccharomyces cerevisiae (strain ATCC 204508 / S288c) (Baker's yeast).